The following is a 267-amino-acid chain: Formamidopyrimidine-DNA glycosylase (267 aa).

The active-site Schiff-base intermediate with DNA is the P2. E3 serves as the catalytic Proton donor. The active-site Proton donor; for beta-elimination activity is K58. DNA contacts are provided by H91, R110, and R152. An FPG-type zinc finger spans residues 233-267; that stretch reads DVYGRGHGTCTSCGGALEAVRLGNRSTVFCPRCQQ. R257 serves as the catalytic Proton donor; for delta-elimination activity.

The protein belongs to the FPG family. As to quaternary structure, monomer. Zn(2+) serves as cofactor.

The enzyme catalyses Hydrolysis of DNA containing ring-opened 7-methylguanine residues, releasing 2,6-diamino-4-hydroxy-5-(N-methyl)formamidopyrimidine.. The catalysed reaction is 2'-deoxyribonucleotide-(2'-deoxyribose 5'-phosphate)-2'-deoxyribonucleotide-DNA = a 3'-end 2'-deoxyribonucleotide-(2,3-dehydro-2,3-deoxyribose 5'-phosphate)-DNA + a 5'-end 5'-phospho-2'-deoxyribonucleoside-DNA + H(+). Its function is as follows. Involved in base excision repair of DNA damaged by oxidation or by mutagenic agents. Acts as a DNA glycosylase that recognizes and removes damaged bases. Has a preference for oxidized purines, such as 7,8-dihydro-8-oxoguanine (8-oxoG). Has AP (apurinic/apyrimidinic) lyase activity and introduces nicks in the DNA strand. Cleaves the DNA backbone by beta-delta elimination to generate a single-strand break at the site of the removed base with both 3'- and 5'-phosphates. The protein is Formamidopyrimidine-DNA glycosylase of Pelobacter propionicus (strain DSM 2379 / NBRC 103807 / OttBd1).